A 342-amino-acid chain; its full sequence is Holliday junction branch migration complex subunit RuvB (342 aa).

A large ATPase domain (RuvB-L) region spans residues 1–184 (MDNERVITAV…FGIVQRLEFY (184 aa)). ATP is bound by residues Ile-23, Arg-24, Gly-65, Lys-68, Thr-69, Thr-70, 131 to 133 (EDY), Arg-174, Tyr-184, and Arg-221. Thr-69 contributes to the Mg(2+) binding site. The segment at 185–255 (SVDDLSGIVS…IAQRALDMLE (71 aa)) is small ATPAse domain (RuvB-S). Positions 258 to 342 (SCGLDGTDRR…PRQDGDLFND (85 aa)) are head domain (RuvB-H). DNA-binding residues include Arg-313 and Arg-318.

The protein belongs to the RuvB family. As to quaternary structure, homohexamer. Forms an RuvA(8)-RuvB(12)-Holliday junction (HJ) complex. HJ DNA is sandwiched between 2 RuvA tetramers; dsDNA enters through RuvA and exits via RuvB. An RuvB hexamer assembles on each DNA strand where it exits the tetramer. Each RuvB hexamer is contacted by two RuvA subunits (via domain III) on 2 adjacent RuvB subunits; this complex drives branch migration. In the full resolvosome a probable DNA-RuvA(4)-RuvB(12)-RuvC(2) complex forms which resolves the HJ.

Its subcellular location is the cytoplasm. The enzyme catalyses ATP + H2O = ADP + phosphate + H(+). Its function is as follows. The RuvA-RuvB-RuvC complex processes Holliday junction (HJ) DNA during genetic recombination and DNA repair, while the RuvA-RuvB complex plays an important role in the rescue of blocked DNA replication forks via replication fork reversal (RFR). RuvA specifically binds to HJ cruciform DNA, conferring on it an open structure. The RuvB hexamer acts as an ATP-dependent pump, pulling dsDNA into and through the RuvAB complex. RuvB forms 2 homohexamers on either side of HJ DNA bound by 1 or 2 RuvA tetramers; 4 subunits per hexamer contact DNA at a time. Coordinated motions by a converter formed by DNA-disengaged RuvB subunits stimulates ATP hydrolysis and nucleotide exchange. Immobilization of the converter enables RuvB to convert the ATP-contained energy into a lever motion, pulling 2 nucleotides of DNA out of the RuvA tetramer per ATP hydrolyzed, thus driving DNA branch migration. The RuvB motors rotate together with the DNA substrate, which together with the progressing nucleotide cycle form the mechanistic basis for DNA recombination by continuous HJ branch migration. Branch migration allows RuvC to scan DNA until it finds its consensus sequence, where it cleaves and resolves cruciform DNA. The sequence is that of Holliday junction branch migration complex subunit RuvB from Alcanivorax borkumensis (strain ATCC 700651 / DSM 11573 / NCIMB 13689 / SK2).